The sequence spans 96 residues: Small ribosomal subunit protein bS6 (96 aa).

It belongs to the bacterial ribosomal protein bS6 family.

Binds together with bS18 to 16S ribosomal RNA. The protein is Small ribosomal subunit protein bS6 of Heliobacterium modesticaldum (strain ATCC 51547 / Ice1).